A 49-amino-acid chain; its full sequence is Delta-actitoxin-Axm1a (49 aa).

3 disulfide bridges follow: Cys4–Cys46, Cys6–Cys36, and Cys29–Cys47.

The protein belongs to the sea anemone sodium channel inhibitory toxin family. Type I subfamily.

It localises to the secreted. It is found in the nematocyst. Functionally, binds specifically to voltage-gated sodium channels (Nav) (site 3), thereby delaying their inactivation. This toxin retains the greatest capacity to discriminate between the cardiac (Nav1.5/SCN5A) and neuronal sodium channels (2.5 nM versus 120 nM, when electrophysiologically tested and 14 nM versus 400 nM, when tested by ion flux), whereas its paralog Anthopleurin-B has the highest affinity of all anemone toxins for the mammalian sodium channel. Its ability to differentiate between cardiac and skeletal channels appears to be associated with domain 4 of the channel. This toxin does not slow or inhibit closed-state inactivation of cardiac sodium channels, but selectively modifies inactivation from the open-state. It does not display phospholipid-binding activities, suggesting that the domain IV S3-S4 linker is located at the extracellular surface and not buried in the phospholipid bilayer. This chain is Delta-actitoxin-Axm1a, found in Anthopleura xanthogrammica (Giant green sea anemone).